The following is a 307-amino-acid chain: MIRHFLRDDDLSPEEQAEVLTLAADLKKTPFSRRPLEGPRGVAVIFEKNSTRTRFSFEMGIAQLGGHAIVVDGRSTQLGREETLEDTGAVLSRYVDAIVWRTFAQERLTAMASGASVPIVNALSDEFHPCQVLADLQTLAERKGKLAGLRMTYFGDGANNMAHSLMLGGVTAGVHVTIAAPDGFEPDPRFVDAARRRAAETGATVALTKDAKAGADGADVLVTDTWTSMGQENDGLDRVRPFRPFQVNADLLELADPAAVVLHCLPAHRGHEITDEVIDGPQSAVFDEAENRLHAQKALLVWLLEKR.

Carbamoyl phosphate contacts are provided by residues 50 to 53, Q77, R101, and 128 to 131; these read STRT and HPCQ. Residues N160, D224, and 228–229 each bind L-ornithine; that span reads SM. Residues 264 to 265 and R292 each bind carbamoyl phosphate; that span reads CL.

Belongs to the aspartate/ornithine carbamoyltransferase superfamily. OTCase family.

The protein localises to the cytoplasm. The enzyme catalyses carbamoyl phosphate + L-ornithine = L-citrulline + phosphate + H(+). The protein operates within amino-acid biosynthesis; L-arginine biosynthesis; L-arginine from L-ornithine and carbamoyl phosphate: step 1/3. With respect to regulation, inhibited by arginine, norvaline. In terms of biological role, reversibly catalyzes the transfer of the carbamoyl group from carbamoyl phosphate (CP) to the N(epsilon) atom of ornithine (ORN) to produce L-citrulline, which is a substrate for argininosuccinate synthetase, the enzyme involved in the final step in arginine biosynthesis. The sequence is that of Ornithine carbamoyltransferase from Mycolicibacterium smegmatis (strain ATCC 700084 / mc(2)155) (Mycobacterium smegmatis).